A 412-amino-acid chain; its full sequence is Serine hydroxymethyltransferase (412 aa).

(6S)-5,6,7,8-tetrahydrofolate-binding positions include Leu-121 and 125-127 (GHL). An N6-(pyridoxal phosphate)lysine modification is found at Lys-230. A (6S)-5,6,7,8-tetrahydrofolate-binding site is contributed by 353-355 (TPF).

This sequence belongs to the SHMT family. Homodimer. The cofactor is pyridoxal 5'-phosphate.

It localises to the cytoplasm. The enzyme catalyses (6R)-5,10-methylene-5,6,7,8-tetrahydrofolate + glycine + H2O = (6S)-5,6,7,8-tetrahydrofolate + L-serine. The protein operates within one-carbon metabolism; tetrahydrofolate interconversion. Its pathway is amino-acid biosynthesis; glycine biosynthesis; glycine from L-serine: step 1/1. Catalyzes the reversible interconversion of serine and glycine with tetrahydrofolate (THF) serving as the one-carbon carrier. This reaction serves as the major source of one-carbon groups required for the biosynthesis of purines, thymidylate, methionine, and other important biomolecules. Also exhibits THF-independent aldolase activity toward beta-hydroxyamino acids, producing glycine and aldehydes, via a retro-aldol mechanism. The protein is Serine hydroxymethyltransferase of Finegoldia magna (strain ATCC 29328 / DSM 20472 / WAL 2508) (Peptostreptococcus magnus).